Here is a 298-residue protein sequence, read N- to C-terminus: Keratin-associated protein 10-11 (298 aa).

25 repeat units span residues Cys26–Pro30, Cys36–Ala40, Cys57–Ala61, Cys79–Ser83, Cys89–Ser93, Cys99–Val103, Cys104–Val108, Cys109–Val113, Cys114–Val118, Cys119–Ala123, Cys126–Ser130, Cys136–Ser140, Cys146–Val150, Cys151–Val155, Cys156–Thr160, Cys168–Ser172, Cys178–Ser182, Cys188–Val192, Cys193–Val197, Cys203–Val207, Cys225–Ser229, Cys230–Ser234, Cys249–Val253, Cys256–Thr260, and Cys267–Ala271. Residues Cys26 to Ala271 form a 25 X 5 AA repeats of C-C-X(3) region.

It belongs to the KRTAP type 10 family. Interacts with hair keratins. In terms of tissue distribution, restricted to a narrow region of the hair fiber cuticle, lying approximately 20 cell layers above the apex of the dermal papilla of the hair root; not detected in any other tissues.

Its function is as follows. In the hair cortex, hair keratin intermediate filaments are embedded in an interfilamentous matrix, consisting of hair keratin-associated proteins (KRTAP), which are essential for the formation of a rigid and resistant hair shaft through their extensive disulfide bond cross-linking with abundant cysteine residues of hair keratins. The matrix proteins include the high-sulfur and high-glycine-tyrosine keratins. This chain is Keratin-associated protein 10-11 (KRTAP10-11), found in Homo sapiens (Human).